The sequence spans 495 residues: Ribose import ATP-binding protein RbsA (495 aa).

2 consecutive ABC transporter domains span residues 7–242 and 250–491; these read LEMR…VGRP and ERDI…TGVN. 39-46 serves as a coordination point for ATP; sequence GENGAGKS.

Belongs to the ABC transporter superfamily. Ribose importer (TC 3.A.1.2.1) family. The complex is composed of an ATP-binding protein (RbsA), two transmembrane proteins (RbsC) and a solute-binding protein (RbsB).

The protein localises to the cell inner membrane. It carries out the reaction D-ribose(out) + ATP + H2O = D-ribose(in) + ADP + phosphate + H(+). Functionally, part of the ABC transporter complex RbsABC involved in ribose import. Responsible for energy coupling to the transport system. The protein is Ribose import ATP-binding protein RbsA of Shigella dysenteriae serotype 1 (strain Sd197).